The following is a 449-amino-acid chain: 23S rRNA (uracil(1939)-C(5))-methyltransferase RlmD (449 aa).

Residues 12-70 (SKQLSAKQSFSVHQLDHLGAGIAQHQGKVVFIPGALPNETVQAQLTEQKKNYARAKLIK) form the TRAM domain. [4Fe-4S] cluster is bound by residues Cys-83, Cys-89, Cys-92, and Cys-170. The S-adenosyl-L-methionine site is built by Gln-282, Phe-311, Asn-316, Glu-332, Asp-359, and Asp-379. Cys-405 acts as the Nucleophile in catalysis.

It belongs to the class I-like SAM-binding methyltransferase superfamily. RNA M5U methyltransferase family. RlmD subfamily.

It catalyses the reaction uridine(1939) in 23S rRNA + S-adenosyl-L-methionine = 5-methyluridine(1939) in 23S rRNA + S-adenosyl-L-homocysteine + H(+). Its function is as follows. Catalyzes the formation of 5-methyl-uridine at position 1939 (m5U1939) in 23S rRNA. The chain is 23S rRNA (uracil(1939)-C(5))-methyltransferase RlmD from Shewanella sp. (strain ANA-3).